A 689-amino-acid chain; its full sequence is Collagen alpha-2(IX) chain (689 aa).

The signal sequence occupies residues 1–23; it reads MAAATASPRSLLVLLQVVVLALA. Residues 26-518 are disordered; sequence RGPPGERGPP…QPGRQGVEGR (493 aa). Residues 27-163 are triple-helical region 4 (COL4); sequence GPPGERGPPG…PGKPGRPGTI (137 aa). The segment covering 31-43 has biased composition (pro residues); the sequence is ERGPPGPPGPPGV. Residues 44-56 show a composition bias toward low complexity; it reads PGSDGIDGDNGPP. Pro residues-rich tracts occupy residues 106-127 and 144-157; these read LPGPPGLPGPGFAGPPGPPGPV and PDGPSGPPGPPGKP. Pro160 is modified (4-hydroxyproline). The segment at 164–180 is nonhelical region 4 (NC4); the sequence is QGLEGSADFLCPTNCPP. Residue Ser169 is glycosylated (O-linked (Xyl...) (glycosaminoglycan) serine). The triple-helical region 3 (COL3) stretch occupies residues 181–519; it reads GMKGPPGLQG…PGRQGVEGRD (339 aa). Residue Lys183 is modified to 5-hydroxylysine. Lys183 carries O-linked (Gal...) hydroxylysine glycosylation. A compositionally biased stretch (gly residues) spans 343–352; sequence GTKGGPGDQG. Low complexity-rich tracts occupy residues 353 to 366 and 393 to 413; these read EPGPQGLPGFSGPP and RGPVGQPGPQGRQGPKGEQGP. Residues 520–549 are nonhelical region 3 (NC3); that stretch reads ATDQHIVDVALKMLQEQLAEVAVSAKREAL. The segment at 550–632 is triple-helical region 2 (COL2); the sequence is GAVGMMGPPG…PGLPGRPGQA (83 aa). Positions 554–663 are disordered; that stretch reads MMGPPGPPGP…LPGPVGLPGF (110 aa). Residues 557–566 are compositionally biased toward pro residues; sequence PPGPPGPPGY. Over residues 599 to 611 the composition is skewed to basic and acidic residues; that stretch reads KRGEKGDPGEVGR. A nonhelical region 2 (NC2) region spans residues 633–634; that stretch reads IN. The interval 635 to 664 is triple-helical region 1 (COL1); the sequence is GKDGDRGSPGAPGEAGRPGLPGPVGLPGFC. The tract at residues 665–689 is nonhelical region 1 (NC1); the sequence is EPAACLGASAYASARLTEPGSIKGP.

Belongs to the fibril-associated collagens with interrupted helices (FACIT) family. In terms of assembly, heterotrimer of an alpha 1(IX), an alpha 2(IX) and an alpha 3(IX) chain. The chains are linked to each other by interchain disulfide bonds. Trimers are also cross-linked via hydroxylysines. Covalently linked to the telopeptides of type II collagen by lysine-derived cross-links. Post-translationally, prolines at the third position of the tripeptide repeating unit (G-X-Y) are hydroxylated in some or all of the chains.

The protein resides in the secreted. The protein localises to the extracellular space. Its subcellular location is the extracellular matrix. Functionally, structural component of hyaline cartilage and vitreous of the eye. This chain is Collagen alpha-2(IX) chain, found in Homo sapiens (Human).